A 205-amino-acid polypeptide reads, in one-letter code: Type-4 uracil-DNA glycosylase (205 aa).

[4Fe-4S] cluster contacts are provided by cysteine 13 and cysteine 16. Residues 40–42 (GEG), phenylalanine 54, and asparagine 80 contribute to the uracil site. Cysteine 84 and cysteine 100 together coordinate [4Fe-4S] cluster. Residue histidine 155 coordinates uracil.

This sequence belongs to the uracil-DNA glycosylase (UDG) superfamily. Type 4 (UDGa) family. In terms of assembly, monomer.

It carries out the reaction Hydrolyzes single-stranded DNA or mismatched double-stranded DNA and polynucleotides, releasing free uracil.. With respect to regulation, product-inhibited by apurinic/apyrimidinic sites. In terms of biological role, removes uracil bases that are present in DNA as a result of either deamination of cytosine or misincorporation of dUMP instead of dTMP. Can remove uracil from double-stranded DNA containing either a U/G, U/A, U/C or U/T base pair as well as from single-stranded DNA. Specifically recognizes uracil that is flipped out from double-stranded DNA. The sequence is that of Type-4 uracil-DNA glycosylase from Thermus thermophilus (strain ATCC 27634 / DSM 579 / HB8).